We begin with the raw amino-acid sequence, 151 residues long: Nucleoside diphosphate kinase (151 aa).

Positions 11, 59, 87, 93, 104, and 114 each coordinate ATP. H117 serves as the catalytic Pros-phosphohistidine intermediate.

The protein belongs to the NDK family. Homotetramer. The cofactor is Mg(2+).

The protein resides in the cytoplasm. It catalyses the reaction a 2'-deoxyribonucleoside 5'-diphosphate + ATP = a 2'-deoxyribonucleoside 5'-triphosphate + ADP. It carries out the reaction a ribonucleoside 5'-diphosphate + ATP = a ribonucleoside 5'-triphosphate + ADP. In terms of biological role, major role in the synthesis of nucleoside triphosphates other than ATP. The ATP gamma phosphate is transferred to the NDP beta phosphate via a ping-pong mechanism, using a phosphorylated active-site intermediate. This chain is Nucleoside diphosphate kinase, found in Prochlorococcus marinus (strain NATL2A).